Reading from the N-terminus, the 426-residue chain is 3-phosphoshikimate 1-carboxyvinyltransferase (426 aa).

3-phosphoshikimate contacts are provided by Lys-22, Ser-23, and Arg-27. Phosphoenolpyruvate is bound at residue Lys-22. Residues Gly-96 and Arg-124 each contribute to the phosphoenolpyruvate site. Residues Ser-170, Ser-171, Gln-172, Ser-198, Asp-314, Asn-337, and Lys-341 each coordinate 3-phosphoshikimate. Gln-172 contacts phosphoenolpyruvate. Asp-314 serves as the catalytic Proton acceptor. The phosphoenolpyruvate site is built by Arg-345, Arg-387, and Lys-412.

Belongs to the EPSP synthase family. As to quaternary structure, monomer.

It localises to the cytoplasm. It carries out the reaction 3-phosphoshikimate + phosphoenolpyruvate = 5-O-(1-carboxyvinyl)-3-phosphoshikimate + phosphate. It functions in the pathway metabolic intermediate biosynthesis; chorismate biosynthesis; chorismate from D-erythrose 4-phosphate and phosphoenolpyruvate: step 6/7. Functionally, catalyzes the transfer of the enolpyruvyl moiety of phosphoenolpyruvate (PEP) to the 5-hydroxyl of shikimate-3-phosphate (S3P) to produce enolpyruvyl shikimate-3-phosphate and inorganic phosphate. This chain is 3-phosphoshikimate 1-carboxyvinyltransferase, found in Shewanella baltica (strain OS195).